The sequence spans 400 residues: Hyaluronidase (400 aa).

An N-terminal signal peptide occupies residues 1-19 (MQTILVLTTFLSAWFLAVG). Disulfide bonds link C31/C319, C196/C209, C344/C355, C349/C384, and C386/C395. Catalysis depends on E120, which acts as the Proton donor. Residues N129 and N166 are each glycosylated (N-linked (GlcNAc...) asparagine). N243 and N275 each carry an N-linked (GlcNAc...) asparagine glycan. The region spanning 340–396 (NVARCSKQACSGRGRCTWPKDTSVIAWKFLVEKEDYDFYLGDIECKCVEGYEGRYCE) is the EGF-like domain.

It belongs to the glycosyl hydrolase 56 family. As to quaternary structure, monomer. Expressed by the venom gland.

It localises to the secreted. The catalysed reaction is Random hydrolysis of (1-&gt;4)-linkages between N-acetyl-beta-D-glucosamine and D-glucuronate residues in hyaluronate.. In terms of biological role, spider venom endo-hyaluronidase that is able to degrade purified hyaluronic acid (HA) and chondroitin sulfate (CS). Has no activity on dermatan sulfate (DS) and heparan sulfate (HS). Also increases the dermonecrotic effect of the dermonecrotic toxin (AC P0CE80), when injected in rabbit skin, supporting the hypothesis that venom hyaluronidases are spreading factors. The protein is Hyaluronidase of Loxosceles intermedia (Brown spider).